The sequence spans 726 residues: Catalase-peroxidase (726 aa).

Positions 1–33 (MSTSDDIHNTTATGKCPFHQGGHDQSAGGGTTT) are disordered. Residues 105-226 (WHGAGTYRSI…LGATEMGLIY (122 aa)) constitute a cross-link (tryptophyl-tyrosyl-methioninium (Trp-Tyr) (with M-252)). The Proton acceptor role is filled by H106. A cross-link (tryptophyl-tyrosyl-methioninium (Tyr-Met) (with W-105)) is located at residues 226 to 252 (YVNPEGPDHSGEPLSAAAAIRATFGNM). A heme b-binding site is contributed by H267.

This sequence belongs to the peroxidase family. Peroxidase/catalase subfamily. Homodimer or homotetramer. Heme b serves as cofactor. In terms of processing, formation of the three residue Trp-Tyr-Met cross-link is important for the catalase, but not the peroxidase activity of the enzyme.

The enzyme catalyses H2O2 + AH2 = A + 2 H2O. It catalyses the reaction 2 H2O2 = O2 + 2 H2O. Its function is as follows. Bifunctional enzyme with both catalase and broad-spectrum peroxidase activity. This Escherichia coli O1:K1 / APEC protein is Catalase-peroxidase.